The chain runs to 684 residues: Ubinuclein-1 (684 aa).

Disordered regions lie at residues 108 to 137 (YKGN…FIDD), 157 to 287 (YVNR…LGKS), 311 to 332 (NVTG…VKSK), 609 to 631 (MVDR…CNPT), and 660 to 684 (PQTR…NLPS). The segment covering 114–137 (SDGEELDGAPDDDEYDTEDSFIDD) has biased composition (acidic residues). Composition is skewed to basic and acidic residues over residues 157–167 (YVNRGKLERME) and 184–199 (SAKP…DKHT). Residues 211–235 (STAPGSWKTQESPLPSGAQDANTSV) show a composition bias toward polar residues. Positions 238–260 (DDVKHSDRANHQSRNDTSHKSRE) are enriched in basic and acidic residues. Polar residues-rich tracts occupy residues 261-284 (TGSS…TSLL), 311-321 (NVTGSRQSSQA), 611-631 (DRSN…CNPT), and 669-684 (QNLN…NLPS).

It belongs to the ubinuclein family. As to quaternary structure, component of the HIRA complex made of UBN1, UBN2, ASF1A, CABIN1 and HIRA. Interacts with HIRA.

It is found in the nucleus. Its subcellular location is the nucleolus. Its function is as follows. May be required for replication-independent chromatin assembly. The chain is Ubinuclein-1 from Arabidopsis thaliana (Mouse-ear cress).